Reading from the N-terminus, the 354-residue chain is Protein REDOX 1 (354 aa).

Cys44 provides a ligand contact to Zn(2+). NAD(+) is bound at residue 45-49 (HSDLH). Residues His66, Cys97, Cys100, Cys103, and Cys111 each contribute to the Zn(2+) site. NAD(+) is bound by residues 185–190 (GLGGLG), Lys214, 271–273 (VGA), 295–297 (SAV), and Arg340.

Belongs to the zinc-containing alcohol dehydrogenase family. Requires Zn(2+) as cofactor. As to expression, expressed in leaf epidermis.

It carries out the reaction 3,17-didehydrostemmadenine + NADPH + H2O = (16S)-deshydroxymethyl-stemmadenine + formate + NADP(+). The catalysed reaction is 3,17-didehydrostemmadenine + NADPH + H2O = (16R)-deshydroxymethyl-stemmadenine + formate + NADP(+). It catalyses the reaction 17-dehydrostemmadenine + NADP(+) = 3,17-didehydrostemmadenine + NADPH. The protein operates within alkaloid biosynthesis. Functionally, component of iboga and aspidosperma monoterpenoid indole alkaloids (MIAs, e.g. tabersonine and catharanthine) biosynthesis pathway from 19E-geissoschizine. Catalyzes the first oxidation step of the unstable intermediate product resulting from the reaction triggered by the geissoschizine oxidase (GO) in the stemmadenine biosynthesis process from 19E-geissoschizine. The sequence is that of Protein REDOX 1 from Catharanthus roseus (Madagascar periwinkle).